The following is a 111-amino-acid chain: IPGGLSPRDVTDPDVQEAAAFAVEKYNAGSKNDYYFKERRVVEAQSQVVSGVKYYLMMELLKTTCKKTVGRPKGYQEIQNCNLPPENQQEEITCRFEVWSRPWLPSTSLTK.

In terms of domain architecture, Cystatin spans 3–103 (GGLSPRDVTD…CRFEVWSRPW (101 aa)). A Secondary area of contact motif is present at residues 47-51 (QVVSG). C65 and C81 are disulfide-bonded.

Belongs to the cystatin family. Expressed by the venom gland.

It localises to the secreted. In terms of biological role, inhibits various C1 cysteine proteases including cathepsin L, papain and cathepsin B. This protein has no toxic activity and its function in the venom is unknown. It may play a role as housekeeping or regulatory protein. The chain is Cystatin from Bitis arietans (African puff adder).